The following is a 31-amino-acid chain: Photosystem II reaction center protein T (31 aa).

A helical membrane pass occupies residues 3-23 (SFAYVLILTFAIATLFFAIAF).

It belongs to the PsbT family. As to quaternary structure, PSII is composed of 1 copy each of membrane proteins PsbA, PsbB, PsbC, PsbD, PsbE, PsbF, PsbH, PsbI, PsbJ, PsbK, PsbL, PsbM, PsbT, PsbX, PsbY, PsbZ, Psb30/Ycf12, peripheral proteins PsbO, CyanoQ (PsbQ), PsbU, PsbV and a large number of cofactors. It forms dimeric complexes.

It is found in the cellular thylakoid membrane. Functionally, found at the monomer-monomer interface of the photosystem II (PS II) dimer, plays a role in assembly and dimerization of PSII. PSII is a light-driven water plastoquinone oxidoreductase, using light energy to abstract electrons from H(2)O, generating a proton gradient subsequently used for ATP formation. The polypeptide is Photosystem II reaction center protein T (Synechococcus sp. (strain CC9902)).